The sequence spans 185 residues: Dirigent protein 12 (185 aa).

Residues 1-25 (MTNQIYKQVFSFFLSVLLLQSSTVS) form the signal peptide. A disulfide bridge links Cys37 with Cys184. N-linked (GlcNAc...) asparagine glycans are attached at residues Asn56 and Asn120.

The protein belongs to the plant dirigent protein family. Homodimer. As to expression, seed coat specific expression.

The protein resides in the secreted. It is found in the extracellular space. It localises to the apoplast. Dirigent proteins impart stereoselectivity on the phenoxy radical-coupling reaction, yielding optically active lignans from two molecules of coniferyl alcohol in the biosynthesis of lignans, flavonolignans, and alkaloids and thus plays a central role in plant secondary metabolism. Required for seed accumulation of neolignans. The sequence is that of Dirigent protein 12 (DIR12) from Arabidopsis thaliana (Mouse-ear cress).